The following is a 217-amino-acid chain: MATLTPRQQQIFDLIRNTIRRTGFPPTRAEIAAEFGFSSPNAAEEHLRALARKGVIELTPGASRGIRLKVAHSDSEMPDQFSLPMAGVMQLTLPLVGRVAAGSPILAAEHIDRQYQVDASVFDERPDYLLRVRGLSMRDAGILDGDLLAVRRASEAANGKIVVARLGDDVTVKRLQRRGGHIELIAENPDFTNIIVEPGEEFSLEGIAVGLIRSSGF.

The segment at residues 28-48 (RAEIAAEFGFSSPNAAEEHLR) is a DNA-binding region (H-T-H motif). Residues Ser136 and Lys173 each act as for autocatalytic cleavage activity in the active site.

The protein belongs to the peptidase S24 family. In terms of assembly, homodimer.

It carries out the reaction Hydrolysis of Ala-|-Gly bond in repressor LexA.. In terms of biological role, represses a number of genes involved in the response to DNA damage (SOS response), including recA and lexA. In the presence of single-stranded DNA, RecA interacts with LexA causing an autocatalytic cleavage which disrupts the DNA-binding part of LexA, leading to derepression of the SOS regulon and eventually DNA repair. This Cupriavidus necator (strain ATCC 17699 / DSM 428 / KCTC 22496 / NCIMB 10442 / H16 / Stanier 337) (Ralstonia eutropha) protein is LexA repressor.